Consider the following 627-residue polypeptide: Altered inheritance of mitochondria protein 9, mitochondrial (627 aa).

The transit peptide at Met1–Val43 directs the protein to the mitochondrion.

The protein belongs to the AIM9 family.

It localises to the mitochondrion. This is Altered inheritance of mitochondria protein 9, mitochondrial (AIM9) from Saccharomyces cerevisiae (strain RM11-1a) (Baker's yeast).